A 213-amino-acid polypeptide reads, in one-letter code: Transcription antitermination protein NusB (213 aa).

Belongs to the NusB family.

Involved in transcription antitermination. Required for transcription of ribosomal RNA (rRNA) genes. Binds specifically to the boxA antiterminator sequence of the ribosomal RNA (rrn) operons. This Picosynechococcus sp. (strain ATCC 27264 / PCC 7002 / PR-6) (Agmenellum quadruplicatum) protein is Transcription antitermination protein NusB.